Here is a 601-residue protein sequence, read N- to C-terminus: Glutamine--fructose-6-phosphate aminotransferase [isomerizing] (601 aa).

The Nucleophile; for GATase activity role is filled by C2. A Glutamine amidotransferase type-2 domain is found at 2 to 216 (CGIVGYIGTN…DKEIVIVTKD (215 aa)). 2 consecutive SIS domains span residues 282–421 (IIDE…EIGD) and 453–591 (IAGE…VDKP). The active-site For Fru-6P isomerization activity is K596.

As to quaternary structure, homodimer.

The protein localises to the cytoplasm. It carries out the reaction D-fructose 6-phosphate + L-glutamine = D-glucosamine 6-phosphate + L-glutamate. Functionally, catalyzes the first step in hexosamine metabolism, converting fructose-6P into glucosamine-6P using glutamine as a nitrogen source. The chain is Glutamine--fructose-6-phosphate aminotransferase [isomerizing] from Listeria monocytogenes serovar 1/2a (strain ATCC BAA-679 / EGD-e).